The sequence spans 130 residues: uncharacterized protein (130 aa).

The next 2 helical transmembrane spans lie at 35 to 57 (FLIT…FISL) and 72 to 91 (IVFF…LLLL).

Its subcellular location is the cell membrane. This is an uncharacterized protein from Pasteurella multocida (strain Pm70).